A 468-amino-acid polypeptide reads, in one-letter code: Tyrosine-protein phosphatase YopH (468 aa).

The interval 127-194 (ARGHVSSHSH…TVSPYGPEAR (68 aa)) is disordered. Residues 130-140 (HVSSHSHSVLH) show a composition bias toward low complexity. A Tyrosine-protein phosphatase domain is found at 152–461 (SHLDPRTPPL…DVLIKLAEGQ (310 aa)). The active-site Phosphocysteine intermediate is C403.

The protein belongs to the protein-tyrosine phosphatase family. Non-receptor class subfamily. In terms of assembly, monomer.

The protein resides in the secreted. It carries out the reaction O-phospho-L-tyrosyl-[protein] + H2O = L-tyrosyl-[protein] + phosphate. Its function is as follows. Essential virulence determinant. This protein is a protein tyrosine phosphatase. The essential function of YopH in Yersinia pathogenesis is host-protein dephosphorylation. It contributes to the ability of the bacteria to resist phagocytosis by peritoneal macrophages. This Yersinia enterocolitica protein is Tyrosine-protein phosphatase YopH (yopH).